The sequence spans 288 residues: Pyridoxal kinase PdxY (288 aa).

Substrate-binding positions include serine 12 and 47 to 48 (TQ). Residues aspartate 114, glutamate 151, lysine 184, and 211–214 (RPLL) each bind ATP. Position 225 (aspartate 225) interacts with substrate.

It belongs to the pyridoxine kinase family. PdxY subfamily. Homodimer. Mg(2+) serves as cofactor.

It carries out the reaction pyridoxal + ATP = pyridoxal 5'-phosphate + ADP + H(+). It participates in cofactor metabolism; pyridoxal 5'-phosphate salvage; pyridoxal 5'-phosphate from pyridoxal: step 1/1. Functionally, pyridoxal kinase involved in the salvage pathway of pyridoxal 5'-phosphate (PLP). Catalyzes the phosphorylation of pyridoxal to PLP. The protein is Pyridoxal kinase PdxY of Pseudomonas aeruginosa (strain UCBPP-PA14).